The chain runs to 479 residues: MDYHSPYFFGYLLGMIHLLGIVAALHALFTVRTAQGAIAWAMPLLFIPYLTLIPYLIFGARSFYAYIKARRQANQEMHVAMANLNWRPWVEEALTARESESYAALRAMPKLGRMPCLANNQVKLLINGKATFDAIFAAIEKARDVVLVQFFIIHDDTLGKALQQLLLRKAAEGVQVFVLYDRVGSHALPASYSQMLRDGGVQIHAFATRRGWFNRFQVNFRNHRKIVVVDGLLGFIGGHNVGDEYLGEHPQLSPWRDTHVQISGPVLACLQESFAEDWYWATRQLPPLILPDTYPDNGVLCQALASGPADPQETCSLFFLEAIHSATRRVWITSPYFIPDEAVFAALRLAVLRGVDVRVLIPSRPDHRIVYAASSLFAFEAVRAGVRMFRYQPGFLHQKVVLVDDDVSAIGSANLDNRSFRLNFEITLLTVDRGFADQVEHMLHEDFEHAREITAEDTQDTHRLQQLGMRIARLISPIL.

A run of 2 helical transmembrane segments spans residues 8–28 (FFGY…LHAL) and 38–58 (IAWA…YLIF). PLD phosphodiesterase domains follow at residues 218 to 245 (VNFR…GDEY) and 392 to 419 (QPGF…DNRS). Residues His-223, Lys-225, Asp-230, His-397, Lys-399, and Asp-404 contribute to the active site.

The protein belongs to the phospholipase D family. Cardiolipin synthase subfamily. ClsA sub-subfamily.

Its subcellular location is the cell inner membrane. It catalyses the reaction 2 a 1,2-diacyl-sn-glycero-3-phospho-(1'-sn-glycerol) = a cardiolipin + glycerol. Catalyzes the reversible phosphatidyl group transfer from one phosphatidylglycerol molecule to another to form cardiolipin (CL) (diphosphatidylglycerol) and glycerol. This chain is Cardiolipin synthase A, found in Pseudomonas putida (strain ATCC 700007 / DSM 6899 / JCM 31910 / BCRC 17059 / LMG 24140 / F1).